The following is a 60-amino-acid chain: Large ribosomal subunit protein uL30 (60 aa).

The protein belongs to the universal ribosomal protein uL30 family. Part of the 50S ribosomal subunit.

This is Large ribosomal subunit protein uL30 from Streptococcus suis (strain 98HAH33).